The following is a 360-amino-acid chain: C-C chemokine receptor type 4 (360 aa).

At 1 to 39 the chain is on the extracellular side; sequence MNATEVTDTTQDETVYNSYYFYESMPKPCTKEGIKAFGE. Asparagine 2 is a glycosylation site (N-linked (GlcNAc...) asparagine). Residues 40 to 67 traverse the membrane as a helical segment; the sequence is VFLPPLYSLVFLLGLFGNSVVVLVLFKY. At 68-77 the chain is on the cytoplasmic side; it reads KRLKSMTDVY. The chain crosses the membrane as a helical span at residues 78 to 98; the sequence is LLNLAISDLLFVLSLPFWGYY. At 99–111 the chain is on the extracellular side; that stretch reads AADQWVFGLGLCK. An intrachain disulfide couples cysteine 110 to cysteine 187. Residues 112-133 traverse the membrane as a helical segment; sequence IVSWMYLVGFYSGIFFIMLMSI. The Cytoplasmic segment spans residues 134–150; sequence DRYLAIVHAVFSLKART. The chain crosses the membrane as a helical span at residues 151 to 175; that stretch reads LTYGVITSLITWSVAVFASLPGLLF. The Extracellular portion of the chain corresponds to 176 to 206; that stretch reads STCYTEHNHTYCKTQYSVNSTTWKVLSSLEI. 2 N-linked (GlcNAc...) asparagine glycosylation sites follow: asparagine 183 and asparagine 194. The helical transmembrane segment at 207–226 threads the bilayer; that stretch reads NVLGLLIPLGIMLFCYSMII. The Cytoplasmic segment spans residues 227–242; the sequence is RTLQHCKNEKKNRAVR. Residues 243–267 traverse the membrane as a helical segment; sequence MIFAVVVLFLGFWTPYNVVLFLETL. The Extracellular segment spans residues 268 to 284; that stretch reads VELEVLQDCTLERYLDY. Residues 285–308 traverse the membrane as a helical segment; that stretch reads AIQATETLAFIHCCLNPVIYFFLG. Over 309–360 the chain is Cytoplasmic; the sequence is EKFRKYITQLFRTCRGPLVLCKHCDFLQVYSADMSSSSYTQSTVDHDFRDAL.

It belongs to the G-protein coupled receptor 1 family. Post-translationally, in natural killer cells, CCL22 binding induces phosphorylation on yet undefined Ser/Thr residues, most probably by beta-adrenergic receptor kinases 1 and 2. In terms of tissue distribution, expressed in the thymus, macrophages and T- and B-cells.

Its subcellular location is the cell membrane. Functionally, high affinity receptor for the C-C type chemokines CCL17/TARC and CCL22/MDC. The activity of this receptor is mediated by G(i) proteins which activate a phosphatidylinositol-calcium second messenger system. Could play a role in lipopolysaccharide (LPS)-induced endotoxic shock. In the CNS, could mediate hippocampal-neuron survival. This chain is C-C chemokine receptor type 4 (Ccr4), found in Mus musculus (Mouse).